The chain runs to 118 residues: Large ribosomal subunit protein bL19 (118 aa).

The protein belongs to the bacterial ribosomal protein bL19 family.

This protein is located at the 30S-50S ribosomal subunit interface and may play a role in the structure and function of the aminoacyl-tRNA binding site. This chain is Large ribosomal subunit protein bL19, found in Marinobacter nauticus (strain ATCC 700491 / DSM 11845 / VT8) (Marinobacter aquaeolei).